A 205-amino-acid polypeptide reads, in one-letter code: Ribosomal RNA small subunit methyltransferase G (205 aa).

S-adenosyl-L-methionine-binding positions include Gly-73, Leu-78, 124–125 (VE), and Arg-138.

This sequence belongs to the methyltransferase superfamily. RNA methyltransferase RsmG family.

It localises to the cytoplasm. It carries out the reaction guanosine(527) in 16S rRNA + S-adenosyl-L-methionine = N(7)-methylguanosine(527) in 16S rRNA + S-adenosyl-L-homocysteine. Its function is as follows. Specifically methylates the N7 position of guanine in position 527 of 16S rRNA. This chain is Ribosomal RNA small subunit methyltransferase G, found in Actinobacillus pleuropneumoniae serotype 5b (strain L20).